The sequence spans 164 residues: Phosphohistidine phosphatase SixA homolog (164 aa).

It belongs to the SixA phosphatase family.

The protein is Phosphohistidine phosphatase SixA homolog (sixA-A) of Haemophilus influenzae (strain ATCC 51907 / DSM 11121 / KW20 / Rd).